Consider the following 184-residue polypeptide: Protein Syd (184 aa).

It belongs to the Syd family.

It localises to the cell inner membrane. Interacts with the SecY protein in vivo. May bind preferentially to an uncomplexed state of SecY, thus functioning either as a chelating agent for excess SecY in the cell or as a regulatory factor that negatively controls the translocase function. The sequence is that of Protein Syd from Edwardsiella ictaluri (strain 93-146).